Reading from the N-terminus, the 903-residue chain is Chitin synthase 1 (903 aa).

The tract at residues 1–154 (MDPRYGAQPQ…YQDQPQQGGG (154 aa)) is disordered. Residues 67–79 (DHLNLNAAQSVDN) show a composition bias toward polar residues. N79 is a glycosylation site (N-linked (GlcNAc...) asparagine). Positions 100-117 (YYNQPYEPRPQQQPYDQG) are enriched in low complexity. The span at 135 to 150 (HQPSDAPSEPYQDQPQ) shows a compositional bias: polar residues. 9 helical membrane passes run 444-464 (SAFGFISVLPGAFSAYRYVAL), 543-563 (RWLNGSFFAAIYAIVHFLDFL), 573-593 (FAFFIEFIFNTINMIFAWFAI), 619-639 (ILGVVFTWLYGVFLITCFVLS), 654-674 (MCWFWAIIMIYLLFAAIFIAV), 700-720 (MLIISVMSTFGIWLIASLIML), 729-749 (LVQYMLLTPTFTNVLNVYAFC), 828-848 (GVVLIWMVSNFGLAALVLSSA), and 875-895 (IVLWSVAGLSAFKFIGAMWFL).

It belongs to the chitin synthase family. Class I subfamily.

The protein resides in the cell membrane. The enzyme catalyses [(1-&gt;4)-N-acetyl-beta-D-glucosaminyl](n) + UDP-N-acetyl-alpha-D-glucosamine = [(1-&gt;4)-N-acetyl-beta-D-glucosaminyl](n+1) + UDP + H(+). Its function is as follows. Polymerizes chitin, a structural polymer of the cell wall and septum, by transferring the sugar moiety of UDP-GlcNAc to the non-reducing end of the growing chitin polymer. Plays an important role in nuclear sorting or distribution. This is Chitin synthase 1 from Fusarium oxysporum f. sp. lycopersici (strain 4287 / CBS 123668 / FGSC 9935 / NRRL 34936) (Fusarium vascular wilt of tomato).